Reading from the N-terminus, the 128-residue chain is Disintegrin gabonin-1 (128 aa).

An N-terminal signal peptide occupies residues 1–20 (MIQVLLVIICLAVFPYQGSS). Residues 21 to 47 (IILESGNVNDYEIVYPKKVTVLPTGAM) constitute a propeptide that is removed on maturation. The 66-residue stretch at 47–112 (MNSAHPCCDP…DCPRNPNKGE (66 aa)) folds into the Disintegrin domain. Disulfide bonds link Cys53–Cys76, Cys67–Cys73, Cys72–Cys97, and Cys85–Cys104. Residues 89–91 (RGD) carry the Cell attachment site motif. The disordered stretch occupies residues 108 to 128 (PNKGESDELEWSAAATGSVLM).

This sequence belongs to the disintegrin family. Dimeric disintegrin subfamily. Heterodimer with bitisgabonin (bitisgabonin-1 is the name of the heterodimer); disulfide-linked. In terms of tissue distribution, expressed by the venom gland.

The protein localises to the secreted. In terms of biological role, the heterodimer bitisgabonin-1 is a potent inhibitor of the adhesion of the RGD-dependent integrin alpha-5/beta-1 (ITGA5/ITGB1) to immobilized fibronectin. The sequence is that of Disintegrin gabonin-1 from Bitis gabonica (Gaboon adder).